We begin with the raw amino-acid sequence, 282 residues long: Bifunctional protein FolD (282 aa).

NADP(+) contacts are provided by residues 165–167 (GAS) and Ile-231.

It belongs to the tetrahydrofolate dehydrogenase/cyclohydrolase family. Homodimer.

It carries out the reaction (6R)-5,10-methylene-5,6,7,8-tetrahydrofolate + NADP(+) = (6R)-5,10-methenyltetrahydrofolate + NADPH. The enzyme catalyses (6R)-5,10-methenyltetrahydrofolate + H2O = (6R)-10-formyltetrahydrofolate + H(+). The protein operates within one-carbon metabolism; tetrahydrofolate interconversion. Catalyzes the oxidation of 5,10-methylenetetrahydrofolate to 5,10-methenyltetrahydrofolate and then the hydrolysis of 5,10-methenyltetrahydrofolate to 10-formyltetrahydrofolate. The chain is Bifunctional protein FolD from Francisella tularensis subsp. holarctica (strain FTNF002-00 / FTA).